Consider the following 175-residue polypeptide: Thioredoxin M-type, chloroplastic (175 aa).

The transit peptide at 1-62 directs the protein to the chloroplast; sequence MALETCLRGW…ARRPSRFVCK (62 aa). In terms of domain architecture, Thioredoxin spans 63–174; sequence CKNVVDEVIV…LCTIIDKYIG (112 aa). Cys98 and Cys101 form a disulfide bridge.

Belongs to the thioredoxin family. Plant M-type subfamily. As to quaternary structure, forms a complex with heterodimeric ferredoxin-thioredoxin reductase (FTR) and ferredoxin.

Its subcellular location is the plastid. It localises to the chloroplast. Participates in various redox reactions through the reversible oxidation of the active center dithiol to a disulfide. The M form is known to activate NADP-malate dehydrogenase. The chain is Thioredoxin M-type, chloroplastic from Triticum aestivum (Wheat).